A 286-amino-acid polypeptide reads, in one-letter code: Cytochrome bo(3) ubiquinol oxidase subunit 2 (286 aa).

The signal sequence occupies residues 1–24; sequence MQFIKYKSYILKFLLVSCIFCING. C25 is lipidated: N-palmitoyl cysteine. Residue C25 is the site of S-diacylglycerol cysteine attachment. The Extracellular portion of the chain corresponds to 25–44; it reads CDCTILCPNGLIAQEQRFVL. Residues 45–67 traverse the membrane as a helical segment; it reads FVSFFTMLLIIIPVIFMTIFFVL. Over 68-85 the chain is Cytoplasmic; the sequence is RYRESNFSKTYDPKWSHS. Residues 86 to 108 form a helical membrane-spanning segment; sequence NIIELLIWGIPIIIIVFLSIFSW. Residues 109–286 are Extracellular-facing; it reads KSVHDLDPKK…VIANVLKISL (178 aa).

Belongs to the cytochrome c oxidase subunit 2 family. As to quaternary structure, heterooctamer of two A chains, two B chains, two C chains and two D chains.

The protein resides in the cell membrane. Functionally, cytochrome bo(3) ubiquinol terminal oxidase is the component of the aerobic respiratory chain of E.coli that predominates when cells are grown at high aeration. Has proton pump activity across the membrane in addition to electron transfer, pumping 2 protons/electron. The sequence is that of Cytochrome bo(3) ubiquinol oxidase subunit 2 (cyoA) from Buchnera aphidicola subsp. Baizongia pistaciae (strain Bp).